Here is a 403-residue protein sequence, read N- to C-terminus: Argininosuccinate synthase (403 aa).

Alanine 10–serine 18 serves as a coordination point for ATP. L-citrulline is bound by residues tyrosine 88 and serine 93. Glycine 118 is an ATP binding site. Positions 120, 124, and 125 each coordinate L-aspartate. Asparagine 124 is a binding site for L-citrulline. Residues arginine 128, serine 177, serine 186, glutamate 263, and tyrosine 275 each coordinate L-citrulline.

Belongs to the argininosuccinate synthase family. Type 1 subfamily. Homotetramer.

Its subcellular location is the cytoplasm. It carries out the reaction L-citrulline + L-aspartate + ATP = 2-(N(omega)-L-arginino)succinate + AMP + diphosphate + H(+). The protein operates within amino-acid biosynthesis; L-arginine biosynthesis; L-arginine from L-ornithine and carbamoyl phosphate: step 2/3. The protein is Argininosuccinate synthase of Clostridium perfringens (strain ATCC 13124 / DSM 756 / JCM 1290 / NCIMB 6125 / NCTC 8237 / Type A).